The sequence spans 288 residues: Acetyl-coenzyme A carboxylase carboxyl transferase subunit beta (288 aa).

A CoA carboxyltransferase N-terminal domain is found at 34–288 (LFAKCPACKH…HLVSFHGGGQ (255 aa)). Cys-38, Cys-41, Cys-56, and Cys-59 together coordinate Zn(2+). The C4-type zinc-finger motif lies at 38–59 (CPACKHMIYKKDLGLAKICPTC).

The protein belongs to the AccD/PCCB family. As to quaternary structure, acetyl-CoA carboxylase is a heterohexamer composed of biotin carboxyl carrier protein (AccB), biotin carboxylase (AccC) and two subunits each of ACCase subunit alpha (AccA) and ACCase subunit beta (AccD). Requires Zn(2+) as cofactor.

It localises to the cytoplasm. It carries out the reaction N(6)-carboxybiotinyl-L-lysyl-[protein] + acetyl-CoA = N(6)-biotinyl-L-lysyl-[protein] + malonyl-CoA. The protein operates within lipid metabolism; malonyl-CoA biosynthesis; malonyl-CoA from acetyl-CoA: step 1/1. In terms of biological role, component of the acetyl coenzyme A carboxylase (ACC) complex. Biotin carboxylase (BC) catalyzes the carboxylation of biotin on its carrier protein (BCCP) and then the CO(2) group is transferred by the transcarboxylase to acetyl-CoA to form malonyl-CoA. The sequence is that of Acetyl-coenzyme A carboxylase carboxyl transferase subunit beta from Streptococcus pyogenes serotype M49 (strain NZ131).